An 80-amino-acid chain; its full sequence is Myocilin opposite strand protein (80 aa).

Residues 53 to 80 (EQAPPPHRTYLTVPPAPPPSPAEDPTVS) form a disordered region.

The protein is Myocilin opposite strand protein of Homo sapiens (Human).